Here is a 369-residue protein sequence, read N- to C-terminus: Chorismate synthase (369 aa).

NADP(+) is bound by residues Arg48 and Arg54. Residues 125 to 127 (RSS), 238 to 239 (NA), Gly278, 293 to 297 (KPTSS), and Arg319 each bind FMN.

It belongs to the chorismate synthase family. As to quaternary structure, homotetramer. It depends on FMNH2 as a cofactor.

The enzyme catalyses 5-O-(1-carboxyvinyl)-3-phosphoshikimate = chorismate + phosphate. It participates in metabolic intermediate biosynthesis; chorismate biosynthesis; chorismate from D-erythrose 4-phosphate and phosphoenolpyruvate: step 7/7. Its function is as follows. Catalyzes the anti-1,4-elimination of the C-3 phosphate and the C-6 proR hydrogen from 5-enolpyruvylshikimate-3-phosphate (EPSP) to yield chorismate, which is the branch point compound that serves as the starting substrate for the three terminal pathways of aromatic amino acid biosynthesis. This reaction introduces a second double bond into the aromatic ring system. The chain is Chorismate synthase from Burkholderia mallei (strain ATCC 23344).